Consider the following 216-residue polypeptide: UPF0598 protein C8orf82 (216 aa).

It belongs to the UPF0598 family.

The polypeptide is UPF0598 protein C8orf82 (C8orf82) (Homo sapiens (Human)).